The sequence spans 306 residues: Uricase (306 aa).

Catalysis depends on charge relay system residues lysine 5 and threonine 65. The urate site is built by threonine 65, aspartate 66, phenylalanine 175, arginine 192, isoleucine 240, glutamine 241, and asparagine 267. Residues 281 to 306 (AKVLREPPRPTGYQQFSMDRSDLEEQ) form a disordered region.

The protein belongs to the uricase family.

It catalyses the reaction urate + O2 + H2O = 5-hydroxyisourate + H2O2. It functions in the pathway purine metabolism; urate degradation; (S)-allantoin from urate: step 1/3. Functionally, catalyzes the oxidation of uric acid to 5-hydroxyisourate, which is further processed to form (S)-allantoin. This is Uricase from Halalkalicoccus jeotgali (strain DSM 18796 / CECT 7217 / JCM 14584 / KCTC 4019 / B3).